A 251-amino-acid chain; its full sequence is Large ribosomal subunit protein uL16m (251 aa).

A mitochondrion-targeting transit peptide spans 1 to 29; it reads MWRLLTRAPAPLWRMHFSDTWAALPTSAG.

The protein belongs to the universal ribosomal protein uL16 family. Component of the mitochondrial ribosome large subunit (39S) which comprises a 16S rRNA and about 50 distinct proteins.

It is found in the mitochondrion. The chain is Large ribosomal subunit protein uL16m (Mrpl16) from Rattus norvegicus (Rat).